The chain runs to 189 residues: MLLSDRDIRKSIDAGDLGIEPFDAELIQPSSVDVRMDRYFRVFNNSKYTHIDPKLNQDELTSLVEVEDGEGFVLHPGEFVLASTLEKFTLPAHLAGRLEGKSSLGRLGLLTHSTAGFIDPGFSGYITLELSNVANLPITLWPGMKVGQLALFQMSSPAETPYGSGKLGSKYQGQRGPTPSKAYLNFPNK.

DCTP contacts are provided by residues 101–106 (KSSLGR), aspartate 119, 127–129 (TLE), glutamine 148, tyrosine 162, lysine 170, and glutamine 174. The Proton donor/acceptor role is filled by glutamate 129. The disordered stretch occupies residues 163 to 189 (GSGKLGSKYQGQRGPTPSKAYLNFPNK).

The protein belongs to the dCTP deaminase family. As to quaternary structure, homotrimer.

The catalysed reaction is dCTP + 2 H2O = dUMP + NH4(+) + diphosphate. It participates in pyrimidine metabolism; dUMP biosynthesis; dUMP from dCTP: step 1/1. Bifunctional enzyme that catalyzes both the deamination of dCTP to dUTP and the hydrolysis of dUTP to dUMP without releasing the toxic dUTP intermediate. In Corynebacterium glutamicum (strain R), this protein is dCTP deaminase, dUMP-forming.